Consider the following 358-residue polypeptide: Insulin gene enhancer protein ISL-2A (358 aa).

2 consecutive LIM zinc-binding domains span residues 27 to 80 (CVGC…CKRD) and 89 to 143 (CANC…RADH). A DNA-binding region (homeobox) is located at residues 190 to 249 (TTRVRTVLNEKQLHTLRTCYNANPRPDALMKEQLVEMTGLSPRVIRVWFQNKRCKDKKRS). Low complexity predominate over residues 325-335 (ESGSMGNSSGS). Positions 325 to 358 (ESGSMGNSSGSDVTSLSSQLPDTPNSMVASPVDT) are disordered. A compositionally biased stretch (polar residues) spans 336–358 (DVTSLSSQLPDTPNSMVASPVDT).

The protein localises to the nucleus. In terms of biological role, binds to one of the cis-acting domain of the insulin gene enhancer. May be involved in subtype specialization of primary motoneurons. The chain is Insulin gene enhancer protein ISL-2A (isl2a) from Oncorhynchus tshawytscha (Chinook salmon).